Here is a 36-residue protein sequence, read N- to C-terminus: Photosystem I reaction center subunit VIII (36 aa).

The chain crosses the membrane as a helical span at residues 8-28 (SFFVPLVCLVFPAIAMAFLFV).

Belongs to the PsaI family.

It localises to the plastid. It is found in the chloroplast thylakoid membrane. Its function is as follows. May help in the organization of the PsaL subunit. The protein is Photosystem I reaction center subunit VIII of Chara vulgaris (Common stonewort).